Reading from the N-terminus, the 310-residue chain is Methionyl-tRNA formyltransferase (310 aa).

Residue 110–113 (SLLP) participates in (6S)-5,6,7,8-tetrahydrofolate binding.

It belongs to the Fmt family.

The catalysed reaction is L-methionyl-tRNA(fMet) + (6R)-10-formyltetrahydrofolate = N-formyl-L-methionyl-tRNA(fMet) + (6S)-5,6,7,8-tetrahydrofolate + H(+). Its function is as follows. Attaches a formyl group to the free amino group of methionyl-tRNA(fMet). The formyl group appears to play a dual role in the initiator identity of N-formylmethionyl-tRNA by promoting its recognition by IF2 and preventing the misappropriation of this tRNA by the elongation apparatus. This is Methionyl-tRNA formyltransferase from Clostridium acetobutylicum (strain ATCC 824 / DSM 792 / JCM 1419 / IAM 19013 / LMG 5710 / NBRC 13948 / NRRL B-527 / VKM B-1787 / 2291 / W).